A 337-amino-acid polypeptide reads, in one-letter code: Neurogenic differentiation factor 6 (337 aa).

Positions 43–82 are disordered; it reads LRGKSIKRAPGEETEKEEEEEDREEEDENGLPRRRGLRKK. A compositionally biased stretch (acidic residues) spans 54 to 71; it reads EETEKEEEEEDREEEDEN. The Nuclear localization signal motif lies at 80-86; the sequence is RKKKTTK. Residues 94-146 enclose the bHLH domain; it reads FRRQEANARERNRMHGLNDALDNLRKVVPCYSKTQKLSKIETLRLAKNYIWAL.

In terms of assembly, efficient DNA binding requires dimerization with another bHLH protein.

The protein resides in the nucleus. Functionally, activates E box-dependent transcription in collaboration with TCF3/E47. May be a trans-acting factor involved in the development and maintenance of the mammalian nervous system. Transactivates the promoter of its own gene. This chain is Neurogenic differentiation factor 6 (NEUROD6), found in Homo sapiens (Human).